The chain runs to 444 residues: MSLNPSRPSSSELVELHVFYVPEGSWNYKLNTISIEVINNFISAGFIRVSPQLTLQALRERLGEFLGVDAVAEKFLFLKCIGNNLAVVKEKQESELKLKSFAPPYALQPELYLLPVIDHLGNVYSASTVNLDEQQSVDDTMEIDGTIHRPDSLSLSKDEPGDPSLLENTWRDFPNHEEAEESQPTQQHFGNPRLPGSLEESDDCLGNVKSPFLWKNNDEDEGEEDDKATINRRQAKLVCDKEHSALPDLIDFPSFPSQRVSSRLVDTSLLKIEREKIIEQMKQVKEERKYLENIREELIKKVEKLFEQSKSKRYHACDSWKKKYFDTKKVTASLEEVLTKLREDLELYYKKLLMQLEAREIKMRPRNLANISDSKNYLIIQITEVQHAIDQLKRKLDTDKMKLILEVKMRKQAASDLQTLRADLTQKKMGTPFRSPIFSGSVPT.

Residues 145–160 are compositionally biased toward basic and acidic residues; the sequence is GTIHRPDSLSLSKDEP. Residues 145–229 are disordered; it reads GTIHRPDSLS…DEGEEDDKAT (85 aa). Residues 268–403 are a coiled coil; sequence SLLKIEREKI…RKLDTDKMKL (136 aa).

Interacts with IFT20.

It is found in the cytoplasmic vesicle. The protein resides in the secretory vesicle. Its subcellular location is the acrosome. The sequence is that of Spermatogenesis-associated protein 1 (Spata1) from Rattus norvegicus (Rat).